The primary structure comprises 530 residues: MSANIDDVPIEVSKVFDTILVLDFGSQYSHLITRRLREFNVYAEMLPCTQKIAELSWKPKGIILSGGPYSVYAEDAPHVDHDIFKLGVPILGICYGMQELAWINGKGVARGDKREYGPATLNVEDPECALFKGVDHSQVWMSHGDKLHALPTGFKVVATSDNSPFCGISNESEHIYGIQFHPEVTHTVQGKKLLKNFAVDICQAKTNWSMENFIDTEIARIKKLVGPTAEVIGAVSGGVDSTVGAKIMKEAIGDRFHAIYVDNGVMRKNETESVKKTLDEGLGINLTVVDAGDLFLGRLKGVTDPEKKRKIIGNTFIHVFEEEAAKIKPRDGSEIEYLLQGTLYPDVIESISFKGPSQTIKTHHNVGGLLEDMKLKLIEPLRELFKDEVRHLGELLGVPEDLVWRHPFPGPGLAIRVLGEVTKEQVKIAREADAIFIEEIKKAGLYRQISQAFAALLPVKSVGVMGDQRTYEQVIALRAIETLDFMTADWFIFEAAFLKKVASRIVNEVDGVARVTYDITSKPPATVEWE.

Residues 18-207 (TILVLDFGSQ…AVDICQAKTN (190 aa)) enclose the Glutamine amidotransferase type-1 domain. C94 functions as the Nucleophile in the catalytic mechanism. Active-site residues include H181 and E183. Residues 208–405 (WSMENFIDTE…LGVPEDLVWR (198 aa)) form the GMPS ATP-PPase domain. Residue 236-242 (SGGVDST) coordinates ATP. The XMP site is built by R309, D467, K522, and E528.

As to quaternary structure, homodimer. It depends on Mg(2+) as a cofactor.

It localises to the cytoplasm. The protein resides in the cytosol. It catalyses the reaction XMP + L-glutamine + ATP + H2O = GMP + L-glutamate + AMP + diphosphate + 2 H(+). It participates in purine metabolism; GMP biosynthesis; GMP from XMP (L-Gln route): step 1/1. In terms of biological role, catalyzes the conversion of xanthine monophosphate (XMP) to GMP in the presence of glutamine and ATP through an adenyl-XMP intermediate. This Candida albicans (strain SC5314 / ATCC MYA-2876) (Yeast) protein is GMP synthase [glutamine-hydrolyzing] (GUA1).